We begin with the raw amino-acid sequence, 120 residues long: Chaperonin GroEL (120 aa).

23 to 27 (DGTTT) is an ATP binding site.

The protein belongs to the chaperonin (HSP60) family. In terms of assembly, forms a cylinder of 14 subunits composed of two heptameric rings stacked back-to-back. Interacts with the co-chaperonin GroES.

The protein localises to the cytoplasm. The enzyme catalyses ATP + H2O + a folded polypeptide = ADP + phosphate + an unfolded polypeptide.. Functionally, together with its co-chaperonin GroES, plays an essential role in assisting protein folding. The GroEL-GroES system forms a nano-cage that allows encapsulation of the non-native substrate proteins and provides a physical environment optimized to promote and accelerate protein folding. The sequence is that of Chaperonin GroEL from Mycobacterium gordonae.